We begin with the raw amino-acid sequence, 256 residues long: Pimeloyl-[acyl-carrier protein] methyl ester esterase (256 aa).

One can recognise an AB hydrolase-1 domain in the interval 15-242; the sequence is HLVLLHGWGL…AAHAPFISHP (228 aa). Residues tryptophan 22, 82–83, and 143–147 contribute to the substrate site; these read SL and FLALQ. The Nucleophile role is filled by serine 82. Active-site residues include aspartate 207 and histidine 235. Position 235 (histidine 235) interacts with substrate.

The protein belongs to the AB hydrolase superfamily. Carboxylesterase BioH family. As to quaternary structure, monomer.

The protein localises to the cytoplasm. It carries out the reaction 6-carboxyhexanoyl-[ACP] methyl ester + H2O = 6-carboxyhexanoyl-[ACP] + methanol + H(+). It functions in the pathway cofactor biosynthesis; biotin biosynthesis. Its function is as follows. The physiological role of BioH is to remove the methyl group introduced by BioC when the pimeloyl moiety is complete. It allows to synthesize pimeloyl-ACP via the fatty acid synthetic pathway through the hydrolysis of the ester bonds of pimeloyl-ACP esters. The protein is Pimeloyl-[acyl-carrier protein] methyl ester esterase of Escherichia coli O17:K52:H18 (strain UMN026 / ExPEC).